The chain runs to 146 residues: SsrA-binding protein (146 aa).

The span at 127–139 shows a compositional bias: basic and acidic residues; it reads KRQTIKDRDNSRE. The tract at residues 127 to 146 is disordered; sequence KRQTIKDRDNSREARKHIRV.

Belongs to the SmpB family.

The protein resides in the cytoplasm. Required for rescue of stalled ribosomes mediated by trans-translation. Binds to transfer-messenger RNA (tmRNA), required for stable association of tmRNA with ribosomes. tmRNA and SmpB together mimic tRNA shape, replacing the anticodon stem-loop with SmpB. tmRNA is encoded by the ssrA gene; the 2 termini fold to resemble tRNA(Ala) and it encodes a 'tag peptide', a short internal open reading frame. During trans-translation Ala-aminoacylated tmRNA acts like a tRNA, entering the A-site of stalled ribosomes, displacing the stalled mRNA. The ribosome then switches to translate the ORF on the tmRNA; the nascent peptide is terminated with the 'tag peptide' encoded by the tmRNA and targeted for degradation. The ribosome is freed to recommence translation, which seems to be the essential function of trans-translation. This Malacoplasma penetrans (strain HF-2) (Mycoplasma penetrans) protein is SsrA-binding protein.